The primary structure comprises 615 residues: Granule-bound starch synthase 1, chloroplastic/amyloplastic (615 aa).

Residues 1 to 70 (MAALVTSQLA…DRRCLSMVVR (70 aa)) constitute a chloroplast transit peptide. ADP-alpha-D-glucose is bound at residue Lys91.

This sequence belongs to the glycosyltransferase 1 family. Bacterial/plant glycogen synthase subfamily. Found in seeds and pollen.

It is found in the plastid. Its subcellular location is the chloroplast. The protein localises to the amyloplast. It carries out the reaction an NDP-alpha-D-glucose + [(1-&gt;4)-alpha-D-glucosyl](n) = [(1-&gt;4)-alpha-D-glucosyl](n+1) + a ribonucleoside 5'-diphosphate + H(+). It functions in the pathway glycan biosynthesis; starch biosynthesis. This Triticum aestivum (Wheat) protein is Granule-bound starch synthase 1, chloroplastic/amyloplastic (WAXY).